The chain runs to 492 residues: Fibroblast growth factor receptor substrate 3 (492 aa).

Gly2 is lipidated: N-myristoyl glycine. The IRS-type PTB domain maps to 13 to 115 (VPHNHPTKFK…QCNSINVTEE (103 aa)). Disordered stretches follow at residues 125–205 (PQEL…EDRR), 337–413 (QQLR…EPPR), and 425–492 (WGTA…DLPL). Polar residues-rich tracts occupy residues 133-147 (GSSQPTGYTVSSFSN) and 166-185 (PSTSSLRHPSPGEESTQTLI). Over residues 374–385 (TSTRASARSHSS) the composition is skewed to low complexity.

Binds NTRK1, FGFR1, NGFR, GRB2, PTPN11 and ERK2. Post-translationally, phosphorylated on tyrosine residues upon stimulation by BFGF or NGFB.

Its subcellular location is the membrane. Adapter protein that links FGF and NGF receptors to downstream signaling pathways. Involved in the activation of MAP kinases. Down-regulates ERK2 signaling by interfering with the phosphorylation and nuclear translocation of ERK2. The polypeptide is Fibroblast growth factor receptor substrate 3 (Frs3) (Rattus norvegicus (Rat)).